The chain runs to 1019 residues: Photoactivated adenylate cyclase subunit alpha (1019 aa).

Residues 55 to 148 (LRRLMYLSAS…GRMYGEWHMK (94 aa)) enclose the BLUF 1 domain. The 129-residue stretch at 204 to 332 (VVTFIYLVEF…DCINTASRIT (129 aa)) folds into the Guanylate cyclase 1 domain. The region spanning 467–559 (LITLTYISQA…RVYGSPLDMT (93 aa)) is the BLUF 2 domain. Residues 615-744 (VMLATDICSF…EVSARVMEVE (130 aa)) form the Guanylate cyclase 2 domain. The tract at residues 822–861 (GTNAPGRGAPAGGIPSSPKVRPPGRTNSVSSYTPDPNEAL) is disordered. The span at 825–839 (APGRGAPAGGIPSSP) shows a compositional bias: low complexity. Positions 846–855 (RTNSVSSYTP) are enriched in polar residues.

This sequence belongs to the adenylyl cyclase class-4/guanylyl cyclase family. Heterotetramer of two alpha and two beta subunits. Requires FAD as cofactor.

The protein resides in the cell projection. It is found in the cilium. The protein localises to the flagellum. The catalysed reaction is ATP = 3',5'-cyclic AMP + diphosphate. Its activity is regulated as follows. Activity increased by up to 80-fold under blue light. Its function is as follows. Acts as a blue light photoreceptor for the step-up photophobic response. Mediates photoavoidance. This chain is Photoactivated adenylate cyclase subunit alpha, found in Euglena gracilis.